Reading from the N-terminus, the 91-residue chain is Cell division topological specificity factor (91 aa).

The protein belongs to the MinE family.

Functionally, prevents the cell division inhibition by proteins MinC and MinD at internal division sites while permitting inhibition at polar sites. This ensures cell division at the proper site by restricting the formation of a division septum at the midpoint of the long axis of the cell. In Lachnospira eligens (strain ATCC 27750 / DSM 3376 / VPI C15-48 / C15-B4) (Eubacterium eligens), this protein is Cell division topological specificity factor.